The sequence spans 359 residues: tRNA N6-adenosine threonylcarbamoyltransferase (359 aa).

Fe cation is bound by residues His115 and His119. Residues 137 to 141, Asp170, Gly183, and Asn283 each bind substrate; that span reads LVSGG. Asp311 serves as a coordination point for Fe cation. The segment at 328-359 is disordered; the sequence is APDSLDIAPRSRWPLDEKSAPVFGTGRRGAKA.

This sequence belongs to the KAE1 / TsaD family. It depends on Fe(2+) as a cofactor.

It is found in the cytoplasm. The catalysed reaction is L-threonylcarbamoyladenylate + adenosine(37) in tRNA = N(6)-L-threonylcarbamoyladenosine(37) in tRNA + AMP + H(+). In terms of biological role, required for the formation of a threonylcarbamoyl group on adenosine at position 37 (t(6)A37) in tRNAs that read codons beginning with adenine. Is involved in the transfer of the threonylcarbamoyl moiety of threonylcarbamoyl-AMP (TC-AMP) to the N6 group of A37, together with TsaE and TsaB. TsaD likely plays a direct catalytic role in this reaction. The protein is tRNA N6-adenosine threonylcarbamoyltransferase of Brucella ovis (strain ATCC 25840 / 63/290 / NCTC 10512).